Consider the following 147-residue polypeptide: Hemoglobin subunit epsilon (147 aa).

The Globin domain maps to 3–147; sequence HFTAEEKAAI…VAIALGHKYH (145 aa). Residues Ser-14 and Ser-51 each carry the phosphoserine modification. Residues His-64 and His-93 each contribute to the heme b site.

This sequence belongs to the globin family. In terms of assembly, heterotetramer of two alpha chains and two epsilon chains in early embryonic hemoglobin Gower-2; two zeta chains and two epsilon chains in early embryonic hemoglobin Gower-1. As to expression, red blood cells.

The epsilon chain is a beta-type chain of early mammalian embryonic hemoglobin. This Lagothrix lagotricha (Brown woolly monkey) protein is Hemoglobin subunit epsilon (HBE1).